Reading from the N-terminus, the 208-residue chain is Ras-related protein M-Ras (208 aa).

GTP-binding residues include D21, G22, G23, V24, G25, K26, S27, A28, F38, V39, P40, Y42, P44, and T45. Position 27 (S27) interacts with Mg(2+). The short motif at 42-50 (YDPTIEDSY) is the Effector region element. Mg(2+) is bound by residues T45 and D67. Residues G70, N126, K127, D129, S156, A157, and K158 each contribute to the GTP site. The residue at position 205 (C205) is a Cysteine methyl ester. The S-geranylgeranyl cysteine moiety is linked to residue C205. A propeptide spans 206–208 (VIL) (removed in mature form).

This sequence belongs to the small GTPase superfamily. Ras family. Component of the SHOC2-MRAS-PP1c (SMP) holophosphatase complex consisting of SHOC2, GTP-bound M-Ras/MRAS and the catalytic subunit of protein phosphatase 1 (either PPP1CA, PPP1CB or PPP1CC). Interacts (active GTP-bound form) with both SHOC2 and PP1c (all isoforms) to form a tertiary complex; SHOC2 and PP1c preferably bind M-Ras/MRAS, but they also bind K-Ras/KRAS, N-Ras/NRAS and H-Ras/HRAS. Interacts with RGL3. Interacts (active GTP-bound form preferentially) with RGS14. Requires Mg(2+) as cofactor. Expressed in skeletal muscle cells.

It is found in the cell membrane. The enzyme catalyses GTP + H2O = GDP + phosphate + H(+). Signal transducer in the Ras-MAPK signaling pathway that regulates cell proliferation and survival. Core component of the SHOC2-MRAS-PP1c (SMP) holophosphatase complex that regulates the MAPK pathway activation. The formation of the SMP complex only occurs when MRAS is GTP-bound. MRAS has low intrinsic GTPase activity and may require additional factors for activation. The SMP complex specifically dephosphorylates the inhibitory phosphorylation at 'Ser-259' of RAF1 kinase, 'Ser-365' of BRAF kinase and 'Ser-214' of ARAF kinase, stimulating their kinase activities. The sequence is that of Ras-related protein M-Ras (Mras) from Rattus norvegicus (Rat).